A 575-amino-acid polypeptide reads, in one-letter code: Arginine--tRNA ligase (575 aa).

Positions 130–140 match the 'HIGH' region motif; that stretch reads ANPTGPMHVGH.

The protein belongs to the class-I aminoacyl-tRNA synthetase family. In terms of assembly, monomer.

It is found in the cytoplasm. The catalysed reaction is tRNA(Arg) + L-arginine + ATP = L-arginyl-tRNA(Arg) + AMP + diphosphate. This chain is Arginine--tRNA ligase, found in Magnetococcus marinus (strain ATCC BAA-1437 / JCM 17883 / MC-1).